The chain runs to 446 residues: Ribosomal protein uS12 methylthiotransferase RimO (446 aa).

In terms of domain architecture, MTTase N-terminal spans 4 to 119 (LKVGLISLGC…LVENINNFIS (116 aa)). Positions 13, 48, 82, 157, 161, and 164 each coordinate [4Fe-4S] cluster. One can recognise a Radical SAM core domain in the interval 143–373 (TTKSHTAYLR…MMLQKHIIYS (231 aa)). The TRAM domain maps to 376 to 442 (KYKIGNKYKV…EYDLVGVVYD (67 aa)).

The protein belongs to the methylthiotransferase family. RimO subfamily. Requires [4Fe-4S] cluster as cofactor.

Its subcellular location is the cytoplasm. The enzyme catalyses L-aspartate(89)-[ribosomal protein uS12]-hydrogen + (sulfur carrier)-SH + AH2 + 2 S-adenosyl-L-methionine = 3-methylsulfanyl-L-aspartate(89)-[ribosomal protein uS12]-hydrogen + (sulfur carrier)-H + 5'-deoxyadenosine + L-methionine + A + S-adenosyl-L-homocysteine + 2 H(+). In terms of biological role, catalyzes the methylthiolation of an aspartic acid residue of ribosomal protein uS12. This chain is Ribosomal protein uS12 methylthiotransferase RimO, found in Clostridium kluyveri (strain ATCC 8527 / DSM 555 / NBRC 12016 / NCIMB 10680 / K1).